We begin with the raw amino-acid sequence, 214 residues long: Mexicain (214 aa).

Intrachain disulfides connect Cys-22/Cys-63, Cys-56/Cys-95, and Cys-153/Cys-200. Residue Cys-25 is part of the active site. Cys-25 provides a ligand contact to E64. Residues His-159 and Asn-175 contribute to the active site.

This sequence belongs to the peptidase C1 family. As to expression, expressed in latex.

The protein resides in the secreted. Functionally, cysteine protease. The sequence is that of Mexicain from Jacaratia mexicana (Wild papaya).